The sequence spans 236 residues: 15,16-dihydrobiliverdin:ferredoxin oxidoreductase (236 aa).

This sequence belongs to the HY2 family.

The catalysed reaction is 15,16-dihydrobiliverdin + oxidized 2[4Fe-4S]-[ferredoxin] = biliverdin IXalpha + reduced 2[4Fe-4S]-[ferredoxin] + 2 H(+). Catalyzes the two-electron reduction of biliverdin IX-alpha at the C15 methine bridge. The sequence is that of 15,16-dihydrobiliverdin:ferredoxin oxidoreductase from Prochlorococcus marinus (strain MIT 9312).